A 335-amino-acid polypeptide reads, in one-letter code: Dye-decolorizing peroxidase (335 aa).

The active-site Proton acceptor is D149. A heme-binding site is contributed by H222. A targeting peptide region spans residues 312–335 (LPQAATPTLAAGSLSIGSLKGSPR).

It belongs to the DyP-type peroxidase family. Homotetramer, presumably also in the encapsulin nanocompartment. Heme b is required as a cofactor.

The protein localises to the encapsulin nanocompartment. The catalysed reaction is 2 a phenolic donor + H2O2 = 2 a phenolic radical donor + 2 H2O. Functionally, cargo of a type 1 encapsulin nanocompartment in situ; this cargo protects against oxidative stress at low pH. When expressed in the cytoplasm (absence of the encapsulin shell gene) it is almost as protective as the intact nanocompartment; its encapsulation has a modest yet significant effect on protection against oxidative stress at low pH. A heme-dependent peroxidase, it probably does not have deferrochelatase activity. Converts guaiacol and H2O2 to tetraguaiacol, also acts on 2,2'-azino-bis(3-ethylbenzothiazoline-6-sulfonic acid) (ABTS). Retains peroxidase activity when encapsulated but has a reduced set of substrates; acts on ABTS but not guaiacol. This chain is Dye-decolorizing peroxidase, found in Mycobacterium tuberculosis (strain ATCC 25618 / H37Rv).